Consider the following 193-residue polypeptide: CDP-diacylglycerol--glycerol-3-phosphate 3-phosphatidyltransferase (193 aa).

4 helical membrane passes run 8-28 (ITLARIALIPIFMIIMLAPFD), 39-59 (IPVAHLAGAILFIIASTTDWV), 88-108 (AALIILVQFDLAPAWMVIVII), and 157-177 (LVSFPFADLALWVAVFFTVVS).

This sequence belongs to the CDP-alcohol phosphatidyltransferase class-I family.

The protein resides in the cell membrane. It carries out the reaction a CDP-1,2-diacyl-sn-glycerol + sn-glycerol 3-phosphate = a 1,2-diacyl-sn-glycero-3-phospho-(1'-sn-glycero-3'-phosphate) + CMP + H(+). It functions in the pathway phospholipid metabolism; phosphatidylglycerol biosynthesis; phosphatidylglycerol from CDP-diacylglycerol: step 1/2. This protein catalyzes the committed step to the synthesis of the acidic phospholipids. This chain is CDP-diacylglycerol--glycerol-3-phosphate 3-phosphatidyltransferase (pgsA), found in Bacillus subtilis (strain 168).